A 407-amino-acid chain; its full sequence is uncharacterized protein (407 aa).

The Lumenal segment spans residues 1–290 (MPLNIIGTAL…SNSLRRVISN (290 aa)). Residues D114, K236, and S281 each coordinate NADP(+). K236 acts as the Lowers pKa of active site Tyr in catalysis. Residues 291 to 311 (GSVVLLIILYCILLYPILWLF) form a helical membrane-spanning segment. Residues 312 to 407 (TKSGRRGDQS…KSQNKSRKDD (96 aa)) are Cytoplasmic-facing. Residues 361–390 (ELQKKLFDNTERDILQLEKKVAAKRNANKT) are a coiled coil. A disordered region spans residues 383–407 (AKRNANKTGNQNSKKKSQNKSRKDD). Basic residues predominate over residues 395–407 (SKKKSQNKSRKDD).

The protein belongs to the short-chain dehydrogenases/reductases (SDR) family.

It is found in the endoplasmic reticulum membrane. Functionally, may be involved in lipid metabolism. This is an uncharacterized protein from Saccharomyces cerevisiae (strain ATCC 204508 / S288c) (Baker's yeast).